A 260-amino-acid chain; its full sequence is Acyl-[acyl-carrier-protein]--UDP-N-acetylglucosamine O-acyltransferase (260 aa).

The protein belongs to the transferase hexapeptide repeat family. LpxA subfamily. As to quaternary structure, homotrimer.

It is found in the cytoplasm. The enzyme catalyses a (3R)-hydroxyacyl-[ACP] + UDP-N-acetyl-alpha-D-glucosamine = a UDP-3-O-[(3R)-3-hydroxyacyl]-N-acetyl-alpha-D-glucosamine + holo-[ACP]. Its pathway is glycolipid biosynthesis; lipid IV(A) biosynthesis; lipid IV(A) from (3R)-3-hydroxytetradecanoyl-[acyl-carrier-protein] and UDP-N-acetyl-alpha-D-glucosamine: step 1/6. Its function is as follows. Involved in the biosynthesis of lipid A, a phosphorylated glycolipid that anchors the lipopolysaccharide to the outer membrane of the cell. The protein is Acyl-[acyl-carrier-protein]--UDP-N-acetylglucosamine O-acyltransferase of Aliarcobacter butzleri (strain RM4018) (Arcobacter butzleri).